The following is a 386-amino-acid chain: Succinate--CoA ligase [ADP-forming] subunit beta (386 aa).

The region spanning 9 to 244 (KDLLTSYQLP…PSQENIRDVL (236 aa)) is the ATP-grasp domain. ATP contacts are provided by residues K46, 53 to 55 (GRG), V102, and E107. N199 and D213 together coordinate Mg(2+). Substrate is bound by residues N264 and 321–323 (GIM).

It belongs to the succinate/malate CoA ligase beta subunit family. As to quaternary structure, heterotetramer of two alpha and two beta subunits. The cofactor is Mg(2+).

It carries out the reaction succinate + ATP + CoA = succinyl-CoA + ADP + phosphate. The catalysed reaction is GTP + succinate + CoA = succinyl-CoA + GDP + phosphate. Its pathway is carbohydrate metabolism; tricarboxylic acid cycle; succinate from succinyl-CoA (ligase route): step 1/1. Functionally, succinyl-CoA synthetase functions in the citric acid cycle (TCA), coupling the hydrolysis of succinyl-CoA to the synthesis of either ATP or GTP and thus represents the only step of substrate-level phosphorylation in the TCA. The beta subunit provides nucleotide specificity of the enzyme and binds the substrate succinate, while the binding sites for coenzyme A and phosphate are found in the alpha subunit. This Chlamydia muridarum (strain MoPn / Nigg) protein is Succinate--CoA ligase [ADP-forming] subunit beta.